Consider the following 435-residue polypeptide: Protein translocase subunit SecY (435 aa).

Transmembrane regions (helical) follow at residues 19 to 39, 68 to 88, 116 to 136, 147 to 167, 179 to 199, 216 to 236, 269 to 289, 311 to 331, 372 to 392, and 395 to 415; these read ILFTIFIILVFRIGTTITVPG, FSVFALGVSPYITASIVVQLL, YIALVLAFVQAIGITAGFDTL, VQTYALICVLLATGSMIVTWL, GVSMIIFAGIVSAIPDMIKGI, FIFVGILIVAVLLIIYFTTFV, VIPVIFASSITAAPAAIFQVV, ISGMFMYAFLIVLFTFFYTFV, VGSLFLGFISILPILAKDVFG, and DAVALGGTSLLIIISTGIEGM.

It belongs to the SecY/SEC61-alpha family. As to quaternary structure, component of the Sec protein translocase complex. Heterotrimer consisting of SecY, SecE and SecG subunits. The heterotrimers can form oligomers, although 1 heterotrimer is thought to be able to translocate proteins. Interacts with the ribosome. Interacts with SecDF, and other proteins may be involved. Interacts with SecA.

The protein localises to the cell membrane. Functionally, the central subunit of the protein translocation channel SecYEG. Consists of two halves formed by TMs 1-5 and 6-10. These two domains form a lateral gate at the front which open onto the bilayer between TMs 2 and 7, and are clamped together by SecE at the back. The channel is closed by both a pore ring composed of hydrophobic SecY resides and a short helix (helix 2A) on the extracellular side of the membrane which forms a plug. The plug probably moves laterally to allow the channel to open. The ring and the pore may move independently. The chain is Protein translocase subunit SecY from Streptococcus sanguinis (strain SK36).